A 311-amino-acid polypeptide reads, in one-letter code: Meteorin-like protein (311 aa).

Residues 1 to 45 (MRGVVWAARRRAGQQWPRSPGPGPGPPPPPPLLLLLLLLLGGASA) form the signal peptide. A disulfide bridge links Cys52 with Cys75. Residue Asn103 is glycosylated (N-linked (GlcNAc...) asparagine). 4 disulfide bridges follow: Cys107/Cys143, Cys188/Cys260, Cys191/Cys284, and Cys201/Cys306.

It belongs to the meteorin family. As to expression, abundantly expressed in adipose tissue.

The protein resides in the secreted. Hormone induced following exercise or cold exposure that promotes energy expenditure. Induced either in the skeletal muscle after exercise or in adipose tissue following cold exposure and is present in the circulation. Able to stimulate energy expenditure associated with the browning of the white fat depots and improves glucose tolerance. Does not promote an increase in a thermogenic gene program via direct action on adipocytes, but acts by stimulating several immune cell subtypes to enter the adipose tissue and activate their prothermogenic actions. Stimulates an eosinophil-dependent increase in IL4 expression and promotes alternative activation of adipose tissue macrophages, which are required for the increased expression of the thermogenic and anti-inflammatory gene programs in fat. Required for some cold-induced thermogenic responses, suggesting a role in metabolic adaptations to cold temperatures. The sequence is that of Meteorin-like protein (Metrnl) from Rattus norvegicus (Rat).